The chain runs to 178 residues: ATP synthase subunit b, chloroplastic (178 aa).

The chain crosses the membrane as a helical span at residues 23-43 (IFETNIINLAAVVAIVISFVG).

It belongs to the ATPase B chain family. F-type ATPases have 2 components, F(1) - the catalytic core - and F(0) - the membrane proton channel. F(1) has five subunits: alpha(3), beta(3), gamma(1), delta(1), epsilon(1). F(0) has four main subunits: a(1), b(1), b'(1) and c(10-14). The alpha and beta chains form an alternating ring which encloses part of the gamma chain. F(1) is attached to F(0) by a central stalk formed by the gamma and epsilon chains, while a peripheral stalk is formed by the delta, b and b' chains.

It localises to the plastid. Its subcellular location is the chloroplast thylakoid membrane. In terms of biological role, f(1)F(0) ATP synthase produces ATP from ADP in the presence of a proton or sodium gradient. F-type ATPases consist of two structural domains, F(1) containing the extramembraneous catalytic core and F(0) containing the membrane proton channel, linked together by a central stalk and a peripheral stalk. During catalysis, ATP synthesis in the catalytic domain of F(1) is coupled via a rotary mechanism of the central stalk subunits to proton translocation. Component of the F(0) channel, it forms part of the peripheral stalk, linking F(1) to F(0). This is ATP synthase subunit b, chloroplastic from Tetradesmus obliquus (Green alga).